Reading from the N-terminus, the 229-residue chain is Zinc finger matrin-type protein 4 (229 aa).

2 Matrin-type zinc fingers span residues 14–44 (SYCK…KVRL) and 72–106 (DKNK…LKLL). The interval 116–135 (TATPLSPLKPPRMDTAPVVA) is disordered. 2 Matrin-type zinc fingers span residues 145 to 175 (RYCG…NAAR) and 198 to 228 (YRCT…NLKN).

It localises to the nucleus. The polypeptide is Zinc finger matrin-type protein 4 (ZMAT4) (Homo sapiens (Human)).